The following is a 792-amino-acid chain: Glucocorticoid receptor (792 aa).

A compositionally biased stretch (basic and acidic residues) spans 1 to 15 (MDSKESLAPPGRDEV). A disordered region spans residues 1–25 (MDSKESLAPPGRDEVPSSLLGRGRG). The modulating stretch occupies residues 1 to 436 (MDSKESLAPP…STATGPPPKL (436 aa)). Arg24 is subject to Omega-N-methylarginine. Residue Ser46 is modified to Phosphoserine. The tract at residues 67–98 (SKGSASNAQQQQQQQQQQQQQQQQQPQPDLSK) is disordered. Residues 75-94 (QQQQQQQQQQQQQQQQQPQP) show a composition bias toward low complexity. A phosphoserine mark is found at Ser131, Ser152, and Ser159. Residues 148–162 (NRSTSRPENPKSSTP) are compositionally biased toward polar residues. The segment at 148–201 (NRSTSRPENPKSSTPAAGCATPTEKEFPQTHSDPSSEQQNRKSQPGTNGGSVKL) is disordered. Residue Thr168 is modified to Phosphothreonine. The span at 176 to 193 (QTHSDPSSEQQNRKSQPG) shows a compositional bias: polar residues. Ser221, Ser229, Ser243, and Ser284 each carry phosphoserine. Glycyl lysine isopeptide (Lys-Gly) (interchain with G-Cter in SUMO); alternate cross-links involve residues Lys294 and Lys310. Residues Lys294 and Lys310 each participate in a glycyl lysine isopeptide (Lys-Gly) (interchain with G-Cter in SUMO2); alternate cross-link. Phosphoserine is present on residues Ser324 and Ser421. Residues 434 to 509 (PKLCLVCSDE…AGMNLEARKT (76 aa)) constitute a DNA-binding region (nuclear receptor). Lys435 participates in a covalent cross-link: Glycyl lysine isopeptide (Lys-Gly) (interchain with G-Cter in ubiquitin). 2 consecutive NR C4-type zinc fingers follow at residues 437-457 (CLVC…CGSC) and 473-497 (CAGR…YRKC). Residues Lys496, Lys508, Lys510, and Lys511 each carry the N6-acetyllysine modification. The interaction with CLOCK stretch occupies residues 501 to 792 (GMNLEARKTK…NIKKLLFHQK (292 aa)). Residues 503-538 (NLEARKTKKKIKGIQQATAGVSQDTSENANKTIVPA) form a hinge region. In terms of domain architecture, NR LBD spans 539-773 (ALPQLTPTLV…FPEMLAEIIT (235 aa)). Residues 547–712 (LVSLLEVIEP…EIRMTYIKEL (166 aa)) form an interaction with CRY1 region. A Glycyl lysine isopeptide (Lys-Gly) (interchain with G-Cter in SUMO) cross-link involves residue Lys718.

This sequence belongs to the nuclear hormone receptor family. NR3 subfamily. Heteromultimeric cytoplasmic complex with HSP90AA1, HSPA1A/HSPA1B, and FKBP5 or another immunophilin such as PPID, STIP1, or the immunophilin homolog PPP5C. Upon ligand binding FKBP5 dissociates from the complex and FKBP4 takes its place, thereby linking the complex to dynein and mediating transport to the nucleus, where the complex dissociates. Probably forms a complex composed of chaperones HSP90 and HSP70, co-chaperones CDC37, PPP5C, TSC1 and client protein TSC2, CDK4, AKT, RAF1 and NR3C1; this complex does not contain co-chaperones STIP1/HOP and PTGES3/p23. Directly interacts with UNC45A. Binds to DNA as a homodimer, and as heterodimer with NR3C2 or the retinoid X receptor. Binds STAT5A and STAT5B homodimers and heterodimers. Interacts with NRIP1, POU2F1, POU2F2 and TRIM28. Interacts with several coactivator complexes, including the SMARCA4 complex, CREBBP/EP300, TADA2L (Ada complex) and p160 coactivators such as NCOA2 and NCOA6. Interaction with BAG1 inhibits transactivation. Interacts with HEXIM1 and TGFB1I1. Interacts with NCOA1. Interacts with NCOA3, SMARCA4, SMARCC1, SMARCD1, and SMARCE1. Interacts with CLOCK, CRY1 and CRY2 in a ligand-dependent fashion. Interacts with CIART. Interacts with RWDD3. Interacts with UBE2I/UBC9 and this interaction is enhanced in the presence of RWDD3. Interacts with GRIP1. Interacts with NR4A3 (via nuclear receptor DNA-binding domain), represses transcription activity of NR4A3 on the POMC promoter Nur response element (NurRE). Directly interacts with PNRC2 to attract and form a complex with UPF1 and DCP1A; the interaction leads to rapid mRNA degradation. Interacts with GSK3B. Interacts with FNIP1 and FNIP2. Interacts (via C-terminus) with HNRNPU (via C-terminus). Interacts with MCM3AP. Interacts (via domain NR LBD) with HSP90AA1 and HSP90AB1. In the absence of hormonal ligand, interacts with TACC1. Interacts (via NR LBD domain) with ZNF764 (via KRAB domain); the interaction regulates transcription factor activity of NR3C1 by directing its actions toward certain biologic pathways. Acetylation by CLOCK reduces its binding to glucocorticoid response elements and its transcriptional activity. In terms of processing, increased proteasome-mediated degradation in response to glucocorticoids. Post-translationally, phosphorylated in the absence of hormone; becomes hyperphosphorylated in the presence of glucocorticoids. Phosphorylated in the absence of hormone; becomes hyperphosphorylated in the presence of glucocorticoid. The Ser-221, Ser-243 and Ser-421-phosphorylated forms are mainly cytoplasmic, and the Ser-229-phosphorylated form is nuclear. Phosphorylation at Ser-229 increases transcriptional activity. Phosphorylation at Ser-221, Ser-243 and Ser-421 decreases signaling capacity. Phosphorylation at Ser-421 may protect from glucocorticoid-induced apoptosis. Phosphorylation at Ser-221 and Ser-229 is not required in regulation of chromosome segregation. May be dephosphorylated by PPP5C, attenuates NR3C1 action. Sumoylation at Lys-294 and Lys-310 negatively regulates its transcriptional activity. Sumoylation at Lys-718 positively regulates its transcriptional activity in the presence of RWDD3. Sumoylation at Lys-294 and Lys-310 is dispensable whereas sumoylation at Lys-718 is critical for the stimulatory effect of RWDD3 on its transcriptional activity. Heat shock increases sumoylation in a RWDD3-dependent manner. In terms of processing, ubiquitinated. Ubiquitination by UBR5 leads to its degradation: UBR5 specifically recognizes and binds ligand-bound NR3C1 when it is not associated with coactivators (NCOAs). In presence of NCOAs, the UBR5-degron is not accessible, preventing its ubiquitination and degradation. Expressed in spleen, kidney and liver. Expressed in a circadian manner in the liver. In terms of tissue distribution, expressed at highest level in spleen with lesser amounts in kidney and liver.

The protein resides in the cytoplasm. It localises to the nucleus. It is found in the mitochondrion. Its subcellular location is the cytoskeleton. The protein localises to the spindle. The protein resides in the microtubule organizing center. It localises to the centrosome. It is found in the chromosome. Its subcellular location is the nucleoplasm. Its function is as follows. Receptor for glucocorticoids (GC). Has a dual mode of action: as a transcription factor that binds to glucocorticoid response elements (GRE), both for nuclear and mitochondrial DNA, and as a modulator of other transcription factors. Affects inflammatory responses, cellular proliferation and differentiation in target tissues. Involved in chromatin remodeling. Plays a role in rapid mRNA degradation by binding to the 5' UTR of target mRNAs and interacting with PNRC2 in a ligand-dependent manner which recruits the RNA helicase UPF1 and the mRNA-decapping enzyme DCP1A, leading to RNA decay. Could act as a coactivator for STAT5-dependent transcription upon growth hormone (GH) stimulation and could reveal an essential role of hepatic GR in the control of body growth. Functionally, has transcriptional activation and repression activity. Mediates glucocorticoid-induced apoptosis. Promotes accurate chromosome segregation during mitosis. May act as a tumor suppressor. May play a negative role in adipogenesis through the regulation of lipolytic and antilipogenic gene expression. Acts as a dominant negative inhibitor of isoform 1. Has intrinsic transcriptional activity independent of isoform Alpha when both isoforms are coexpressed. Loses this transcription modulator function on its own. Has no hormone-binding activity. May play a role in controlling glucose metabolism by maintaining insulin sensitivity. Reduces hepatic gluconeogenesis through down-regulation of PEPCK in an isoform Alpha-dependent manner. Directly regulates STAT1 expression in isoform Alpha-independent manner. This chain is Glucocorticoid receptor (Nr3c1), found in Mus musculus (Mouse).